We begin with the raw amino-acid sequence, 257 residues long: Deoxyribose-phosphate aldolase (257 aa).

Residue Asp-102 is the Proton donor/acceptor of the active site. Residue Lys-166 is the Schiff-base intermediate with acetaldehyde of the active site. Lys-198 serves as the catalytic Proton donor/acceptor.

It belongs to the DeoC/FbaB aldolase family. DeoC type 2 subfamily.

The protein resides in the cytoplasm. The catalysed reaction is 2-deoxy-D-ribose 5-phosphate = D-glyceraldehyde 3-phosphate + acetaldehyde. Its pathway is carbohydrate degradation; 2-deoxy-D-ribose 1-phosphate degradation; D-glyceraldehyde 3-phosphate and acetaldehyde from 2-deoxy-alpha-D-ribose 1-phosphate: step 2/2. Functionally, catalyzes a reversible aldol reaction between acetaldehyde and D-glyceraldehyde 3-phosphate to generate 2-deoxy-D-ribose 5-phosphate. This Shewanella loihica (strain ATCC BAA-1088 / PV-4) protein is Deoxyribose-phosphate aldolase.